The following is a 217-amino-acid chain: Large ribosomal subunit protein uL3 (217 aa).

Residues 129-162 (SRGPMSHGSKNHRAPGSTGAGTTPGRIYPGKRMA) are disordered. Over residues 142 to 153 (APGSTGAGTTPG) the composition is skewed to low complexity.

This sequence belongs to the universal ribosomal protein uL3 family. In terms of assembly, part of the 50S ribosomal subunit. Forms a cluster with proteins L14 and L19.

Functionally, one of the primary rRNA binding proteins, it binds directly near the 3'-end of the 23S rRNA, where it nucleates assembly of the 50S subunit. The polypeptide is Large ribosomal subunit protein uL3 (Prochlorococcus marinus (strain MIT 9215)).